Here is a 479-residue protein sequence, read N- to C-terminus: UDP-N-acetylmuramate--L-alanine ligase (479 aa).

Position 124–130 (124–130 (GSHGKTT)) interacts with ATP.

This sequence belongs to the MurCDEF family.

It localises to the cytoplasm. It catalyses the reaction UDP-N-acetyl-alpha-D-muramate + L-alanine + ATP = UDP-N-acetyl-alpha-D-muramoyl-L-alanine + ADP + phosphate + H(+). Its pathway is cell wall biogenesis; peptidoglycan biosynthesis. Cell wall formation. The sequence is that of UDP-N-acetylmuramate--L-alanine ligase from Synechococcus sp. (strain RCC307).